Reading from the N-terminus, the 817-residue chain is Probable beta-glucosidase G (817 aa).

A signal peptide spans 1-20 (MANIAHLIVSGLLAATVAHG). N-linked (GlcNAc...) asparagine glycosylation is found at asparagine 40, asparagine 58, asparagine 229, and asparagine 276. Residue aspartate 304 is part of the active site. Residues asparagine 343, asparagine 350, asparagine 402, asparagine 507, asparagine 563, asparagine 584, asparagine 623, asparagine 662, asparagine 679, and asparagine 715 are each glycosylated (N-linked (GlcNAc...) asparagine).

It belongs to the glycosyl hydrolase 3 family.

The protein localises to the secreted. It carries out the reaction Hydrolysis of terminal, non-reducing beta-D-glucosyl residues with release of beta-D-glucose.. The protein operates within glycan metabolism; cellulose degradation. Functionally, beta-glucosidases are one of a number of cellulolytic enzymes involved in the degradation of cellulosic biomass. Catalyzes the last step releasing glucose from the inhibitory cellobiose. The sequence is that of Probable beta-glucosidase G (bglG) from Aspergillus terreus (strain NIH 2624 / FGSC A1156).